The following is a 128-amino-acid chain: Holin-like protein CidA (128 aa).

The next 4 helical transmembrane spans lie at 4-24 (LLLTVIQIALLFIFARLINWV), 26-46 (ALLHINIPGSIIGIVILFTLL), 59-79 (GAAWLLGELLLFFIPSAVGVI), and 88-108 (FGVSILLVVIISTFVVMVSTG).

Belongs to the CidA/LrgA family. CidA subfamily.

Its subcellular location is the cell membrane. Increases the activity of extracellular murein hydrolases possibly by mediating their export via hole formation. Inhibited by the antiholin-like proteins LrgAB. In an unstressed cell, the LrgAB products probably inhibit the function of the CidA protein. When a cell is stressed by the addition of antibiotics or by other factors in the environment, CidA possibly oligomerizes within the bacterial cell membrane, creating lesions that disrupt the proton motive force, which in turn results in loss of cell viability. These lesions are also hypothesized to regulate the subsequent cell lysis by either allowing the murein hydrolases access to the cell wall substrate and/or regulating their activity by a possible change in the cell wall pH that results from loss of membrane potential. The protein is Holin-like protein CidA of Bacillus subtilis (strain 168).